We begin with the raw amino-acid sequence, 101 residues long: Small ribosomal subunit protein uS14A (101 aa).

The disordered stretch occupies residues 29–60 (EIIRSPRSTPEQRTAAQNELAHQPRDASAVRV). Residues 34-45 (PRSTPEQRTAAQ) are compositionally biased toward polar residues.

This sequence belongs to the universal ribosomal protein uS14 family. Part of the 30S ribosomal subunit. Contacts proteins S3 and S10.

Its function is as follows. Binds 16S rRNA, required for the assembly of 30S particles and may also be responsible for determining the conformation of the 16S rRNA at the A site. The sequence is that of Small ribosomal subunit protein uS14A from Mycolicibacterium paratuberculosis (strain ATCC BAA-968 / K-10) (Mycobacterium paratuberculosis).